We begin with the raw amino-acid sequence, 722 residues long: MWGLLLAVTAFAPSVGLGLGAPSASVPGLAPGSTLAPHSSVAQPSTKANETSERHVRLRVIKKKKIVVKKRKKLRHPGPLGTARPVVPTHPAKTLTLPEKQEPGCPPLGLESLRVSDSQLEASSSQSFGLGAHRGRLNIQSGLEDGDLYDGAWCAEQQDTEPWLQVDAKNPVRFAGIVTQGRNSVWRYDWVTSFKVQFSNDSQTWWKSRNSTGMDIVFPANSDAETPVLNLLPEPQVARFIRLLPQTWFQGGAPCLRAEILACPVSDPNDLFPEAHTLGSSNSLDFRHHNYKAMRKLMKQVNEQCPNITRIYSIGKSHQGLKLYVMEMSDHPGEHELGEPEVRYVAGMHGNEALGRELLLLLMQFLCHEFLRGDPRVTRLLTETRIHLLPSMNPDGYETAYHRGSELVGWAEGRWTHQGIDLNHNFADLNTQLWYAEDDGLVPDTVPNHHLPLPTYYTLPNATVAPETWAVIKWMKRIPFVLSANLHGGELVVSYPFDMTRTPWAARELTPTPDDAVFRWLSTVYAGTNRAMQDTDRRPCHSQDFSLHGNVINGADWHTVPGSMNDFSYLHTNCFEVTVELSCDKFPHEKELPQEWENNKDALLTYLEQVRMGITGVVRDKDTELGIADAVIAVEGINHDVTTAWGGDYWRLLTPGDYVVTASAEGYHTVRQHCQVTFEEGPVPCNFLLTKTPKERLRELLATRGKLPPDLRRKLERLRGQK.

The signal sequence occupies residues 1–20; it reads MWGLLLAVTAFAPSVGLGLG. Residues 30–54 are disordered; the sequence is APGSTLAPHSSVAQPSTKANETSER. Over residues 36 to 49 the composition is skewed to polar residues; that stretch reads APHSSVAQPSTKAN. N-linked (GlcNAc...) asparagine glycosylation is found at N49, N200, N210, and N307. The 161-residue stretch at 103–263 folds into the F5/8 type C domain; it reads PGCPPLGLES…PCLRAEILAC (161 aa). A disulfide bond links C105 and C263. One can recognise a Peptidase M14 domain in the interval 287–610; the sequence is RHHNYKAMRK…DALLTYLEQV (324 aa). Zn(2+)-binding residues include H349 and E352. N-linked (GlcNAc...) asparagine glycosylation is present at N461. Zn(2+) is bound at residue H487. E580 (proton donor/acceptor) is an active-site residue.

This sequence belongs to the peptidase M14 family. It depends on Zn(2+) as a cofactor. As to expression, strongly expressed in testis and spleen. Moderately expressed in salivary gland, brain, heart, lung, and kidney. Extremely low expression in liver and muscle. No expression in eye, adrenal, and white adipose tissues.

It is found in the secreted. Its function is as follows. May be involved in cell-cell interactions. No carboxypeptidase activity was found yet. This is Probable carboxypeptidase X1 (Cpxm1) from Mus musculus (Mouse).